A 387-amino-acid polypeptide reads, in one-letter code: S-adenosylmethionine synthase (387 aa).

Position 15 (H15) interacts with ATP. D17 contacts Mg(2+). E43 serves as a coordination point for K(+). 2 residues coordinate L-methionine: E56 and Q99. Residues 99–109 form a flexible loop region; sequence QSPDIAQGVNA. Residues 166 to 168, 232 to 233, D241, 247 to 248, A264, and K268 contribute to the ATP site; these read DAK, RF, and RK. D241 contacts L-methionine. K272 provides a ligand contact to L-methionine.

The protein belongs to the AdoMet synthase family. Homotetramer; dimer of dimers. The cofactor is Mg(2+). Requires K(+) as cofactor.

It localises to the cytoplasm. The enzyme catalyses L-methionine + ATP + H2O = S-adenosyl-L-methionine + phosphate + diphosphate. Its pathway is amino-acid biosynthesis; S-adenosyl-L-methionine biosynthesis; S-adenosyl-L-methionine from L-methionine: step 1/1. Catalyzes the formation of S-adenosylmethionine (AdoMet) from methionine and ATP. The overall synthetic reaction is composed of two sequential steps, AdoMet formation and the subsequent tripolyphosphate hydrolysis which occurs prior to release of AdoMet from the enzyme. This Dechloromonas aromatica (strain RCB) protein is S-adenosylmethionine synthase.